We begin with the raw amino-acid sequence, 460 residues long: Methionine aminopeptidase 2-1 (460 aa).

The tract at residues Met-1–Pro-90 is disordered. Low complexity predominate over residues Ser-30–Gly-39. Positions Glu-42–Glu-52 are enriched in acidic residues. Over residues Thr-69–Ser-81 the composition is skewed to basic residues. His-212 contacts substrate. Residues Asp-233, Asp-244, and His-313 each contribute to the a divalent metal cation site. His-321 provides a ligand contact to substrate. Glu-346 and Glu-441 together coordinate a divalent metal cation.

Belongs to the peptidase M24A family. Methionine aminopeptidase eukaryotic type 2 subfamily. The cofactor is Co(2+). Requires Zn(2+) as cofactor. Mn(2+) is required as a cofactor. It depends on Fe(2+) as a cofactor.

It is found in the cytoplasm. It catalyses the reaction Release of N-terminal amino acids, preferentially methionine, from peptides and arylamides.. Its function is as follows. Cotranslationally removes the N-terminal methionine from nascent proteins. The N-terminal methionine is often cleaved when the second residue in the primary sequence is small and uncharged (Met-Ala-, Cys, Gly, Pro, Ser, Thr, or Val). This Leptosphaeria maculans (strain JN3 / isolate v23.1.3 / race Av1-4-5-6-7-8) (Blackleg fungus) protein is Methionine aminopeptidase 2-1.